The primary structure comprises 417 residues: METPTLNKSGSLTIVGTGIESIGQMTLQTLSYIEAADKVFYCVIDPATEAFILTKNKDCVDLYQYYDNGKSRMDTYTQMSEVMLREVRKGLDVVGVFYGHPGVFVNPSLRALAIAKSEGFKARMLPGVSAEDCLYADLCIDPSNPGCLTYEASDFLIRERPTNIYSHFILFQVGCVGIADFNFTGFENSKFGILVDRLEKEYGAEHPVVHYIAAMLPHEDPVTDQWTIGQLREPEFYKRVGGVSTFYIPPKERKEINVDIIRELKFLPEGKVPDTRTQIYPPNQWEPEVPTVPAYGSNEHAAIAQLDTHTPPEQYQPLATSKAMTDVMTKLALDPKALAEYKADHRAFAQSVPDLTANERTALEIGDSWAFRCAMKEMPISLLDNAKQSMEEASEQGFPWIIVVGVVGVVGSVVSSA.

Residues 1-251 (METPTLNKSG…GVSTFYIPPK (251 aa)) are methyltransferase domain. Catalysis depends on residues Arg72, Tyr76, and Tyr98. 8 residues coordinate S-adenosyl-L-methionine: Tyr98, His100, Val103, Ala130, Gln172, Ala213, Ser244, and Thr245. The tract at residues 252 to 378 (ERKEINVDII…WAFRCAMKEM (127 aa)) is clasp domain. The interval 379–399 (PISLLDNAKQSMEEASEQGFP) is precursor leader. Position 401 is an N-methylisoleucine (Ile401). 2 positions are modified to N-methylvaline: Val403 and Val404. Gly405 carries the N-methylglycine modification. N-methylvaline occurs at positions 406 and 407. Gly408 carries the N-methylglycine modification. The residue at position 410 (Val410) is an N-methylvaline. An N-methylglycine modification is found at Gly411. Position 413 is an N-methylvaline (Val413).

This sequence in the N-terminal section; belongs to the precorrin methyltransferase family. Homodimer. Post-translationally, ledMA automethylates at Ile-401, Val-403, Val-404, Gly-405, Val-406, Val-407, Gly-408, Val-410, Gly-411 and Val-413 before being processed by the prolyloligopeptidase ledP which likely forms a peptidyl ester upon removal of the follower propeptide, which then undergoes macrocyclization with the N-terminus of the modified core peptide. Peptide backbone alpha-N-methylations change the physicochemical properties of amide bonds to provide structural constraints and other favorable characteristics including biological membrane permeability to peptides.

Its pathway is mycotoxin biosynthesis. Fusion protein of the methyltransferase ledM and the lentinulin A core peptide; part of the gene cluster that mediates the biosynthesis of lentinulin A, a highly methylated cyclic dodecapeptide with nematodicidal activity. Lentinulin A derives from the C-terminus of the ledMA protein, and it is the ledMA protein that methylates its own C-terminus using S-adenosyl methionine (SAM). The C-terminus is subsequently cleaved off and macrocyclized by the prolyloligopeptidase ledP to give the final product. The chain is Methyltransferase/ribosomally synthesized cyclic peptide lentinulin A precursor ledMA from Lentinula edodes (Shiitake mushroom).